The following is a 443-amino-acid chain: UDP-N-acetylmuramate--L-alanine ligase (443 aa).

110–116 (GAHGKTS) is a binding site for ATP.

It belongs to the MurCDEF family.

It localises to the cytoplasm. It catalyses the reaction UDP-N-acetyl-alpha-D-muramate + L-alanine + ATP = UDP-N-acetyl-alpha-D-muramoyl-L-alanine + ADP + phosphate + H(+). It participates in cell wall biogenesis; peptidoglycan biosynthesis. Its function is as follows. Cell wall formation. This is UDP-N-acetylmuramate--L-alanine ligase from Streptococcus equi subsp. zooepidemicus (strain H70).